The following is a 298-amino-acid chain: GTPase Era (298 aa).

The 168-residue stretch at lysine 4–glutamate 171 folds into the Era-type G domain. The G1 stretch occupies residues glycine 12 to serine 19. Glycine 12–serine 19 contributes to the GTP binding site. Residues glutamine 38–asparagine 42 are G2. Residues aspartate 59–glycine 62 are G3. Residues aspartate 59–isoleucine 63 and asparagine 121–aspartate 124 contribute to the GTP site. The segment at asparagine 121–aspartate 124 is G4. The tract at residues isoleucine 150–alanine 152 is G5. In terms of domain architecture, KH type-2 spans leucine 202 to proline 279.

It belongs to the TRAFAC class TrmE-Era-EngA-EngB-Septin-like GTPase superfamily. Era GTPase family. Monomer.

It localises to the cytoplasm. It is found in the cell membrane. Functionally, an essential GTPase that binds both GDP and GTP, with rapid nucleotide exchange. Plays a role in 16S rRNA processing and 30S ribosomal subunit biogenesis and possibly also in cell cycle regulation and energy metabolism. The polypeptide is GTPase Era (Ruminiclostridium cellulolyticum (strain ATCC 35319 / DSM 5812 / JCM 6584 / H10) (Clostridium cellulolyticum)).